We begin with the raw amino-acid sequence, 140 residues long: MSQTLSDKIKIVVSSGKRKTSIARAVIKPGIGRVWINNVPVEFIQFELAKMKILEPLLLIGDLAKTVDIRVNVHGGGYMSQAEAVRIAIARGLVEFFNSDEVKSLFKEYDRHMLSGDPRQTEPKKWGRYSARRRWQKSYR.

The protein belongs to the universal ribosomal protein uS9 family.

The polypeptide is Small ribosomal subunit protein uS9 (Desulfurococcus amylolyticus (strain DSM 18924 / JCM 16383 / VKM B-2413 / 1221n) (Desulfurococcus kamchatkensis)).